Reading from the N-terminus, the 338-residue chain is NADPH dehydrogenase (338 aa).

Residue 23 to 26 (SPMC) participates in FMN binding. Tyrosine 28 lines the substrate pocket. FMN contacts are provided by alanine 60 and glutamine 102. 163 to 166 (HGAH) provides a ligand contact to substrate. FMN contacts are provided by residues arginine 214 and 306–307 (AR).

It belongs to the NADH:flavin oxidoreductase/NADH oxidase family. NamA subfamily. In terms of assembly, homotetramer. FMN is required as a cofactor.

It catalyses the reaction A + NADPH + H(+) = AH2 + NADP(+). In terms of biological role, catalyzes the reduction of the double bond of an array of alpha,beta-unsaturated aldehydes and ketones. It also reduces the nitro group of nitroester and nitroaromatic compounds. It could have a role in detoxification processes. In Halalkalibacterium halodurans (strain ATCC BAA-125 / DSM 18197 / FERM 7344 / JCM 9153 / C-125) (Bacillus halodurans), this protein is NADPH dehydrogenase.